A 241-amino-acid chain; its full sequence is DNA repair protein RecO (241 aa).

It belongs to the RecO family.

Involved in DNA repair and RecF pathway recombination. The sequence is that of DNA repair protein RecO from Rickettsia bellii (strain OSU 85-389).